The following is a 486-amino-acid chain: Cardiolipin synthase A (486 aa).

The next 2 helical transmembrane spans lie at 3–23 (TFYTVLSWLTFFFYWLLIAGV) and 38–58 (MTWLLIIYILPLVGVIAYFAF). PLD phosphodiesterase domains are found at residues 219 to 246 (MDLRQHRKIVLIDNYISYTGSMNMVDPR) and 399 to 426 (EDGLLHTKSVMVDGQLSMVGSVNLDMRS). Active-site residues include H224, K226, D231, H404, K406, and D411.

The protein belongs to the phospholipase D family. Cardiolipin synthase subfamily. ClsA sub-subfamily.

The protein localises to the cell inner membrane. It catalyses the reaction 2 a 1,2-diacyl-sn-glycero-3-phospho-(1'-sn-glycerol) = a cardiolipin + glycerol. In terms of biological role, catalyzes the reversible phosphatidyl group transfer from one phosphatidylglycerol molecule to another to form cardiolipin (CL) (diphosphatidylglycerol) and glycerol. This Proteus mirabilis (strain HI4320) protein is Cardiolipin synthase A.